Consider the following 151-residue polypeptide: Ribosome maturation factor RimP (151 aa).

Belongs to the RimP family.

It is found in the cytoplasm. Its function is as follows. Required for maturation of 30S ribosomal subunits. The chain is Ribosome maturation factor RimP from Thermoanaerobacter sp. (strain X514).